The chain runs to 67 residues: ATP synthase protein 8 (67 aa).

Residues 8–24 (TWFITILATILTLFIIM) traverse the membrane as a helical segment. Lysine 54 is subject to N6-acetyllysine; alternate. Lysine 54 bears the N6-succinyllysine; alternate mark. Lysine 57 carries the post-translational modification N6-acetyllysine.

The protein belongs to the ATPase protein 8 family. As to quaternary structure, F-type ATPases have 2 components, CF(1) - the catalytic core - and CF(0) - the membrane proton channel. Component of an ATP synthase complex composed of ATP5PB, ATP5MC1, ATP5F1E, ATP5PD, ATP5ME, ATP5PF, ATP5MF, MT-ATP6, MT-ATP8, ATP5F1A, ATP5F1B, ATP5F1D, ATP5F1C, ATP5PO, ATP5MG, ATP5MK and ATP5MJ. Interacts with PRICKLE3.

It localises to the mitochondrion membrane. Its function is as follows. Mitochondrial membrane ATP synthase (F(1)F(0) ATP synthase or Complex V) produces ATP from ADP in the presence of a proton gradient across the membrane which is generated by electron transport complexes of the respiratory chain. F-type ATPases consist of two structural domains, F(1) - containing the extramembraneous catalytic core and F(0) - containing the membrane proton channel, linked together by a central stalk and a peripheral stalk. During catalysis, ATP synthesis in the catalytic domain of F(1) is coupled via a rotary mechanism of the central stalk subunits to proton translocation. Part of the complex F(0) domain. Minor subunit located with subunit a in the membrane. In Artibeus jamaicensis (Jamaican fruit-eating bat), this protein is ATP synthase protein 8 (MT-ATP8).